The sequence spans 258 residues: Aquaglyceroporin (258 aa).

Topologically, residues 1–11 (MHMLFYKSYVR) are cytoplasmic. Residues 12–32 (EFIGEFLGTFVLMFLGEGATA) form a helical membrane-spanning segment. At 33 to 45 (NFHTTGLSGDWYK) the chain is on the extracellular side. The helical transmembrane segment at 46–66 (LCLGWGLAVFFGILVSAKLSG) threads the bilayer. Residues Gly66, Ala67, and Asn70 each contribute to the glycerol site. The Cytoplasmic segment spans residues 67-87 (AHLNLAVSIGLSSINKFDLKK). Residues 88 to 108 (IPVYFFAQLLGAFVGTSTVYG) traverse the membrane as a helical segment. The Extracellular portion of the chain corresponds to 109-135 (LYHGFISNSKIPQFAWETSRNPSISLT). Position 127 (Ser127) interacts with glycerol. The chain crosses the membrane as a helical span at residues 136–156 (GAFFNELILTGILLLVILVVV). The Cytoplasmic portion of the chain corresponds to 157–171 (DENICGKFHILKLSS). Residues 172–192 (VVGLIILCIGITFGGNTGFAL) form a helical membrane-spanning segment. Positions 189, 190, 193, and 196 each coordinate glycerol. Over 193 to 217 (NPSRDLGSRFLSLIAYGKDTFTKDN) the chain is Extracellular. The chain crosses the membrane as a helical span at residues 218–238 (FYFWVPLVAPCVGSVVFCQFY). Topologically, residues 239-258 (DKVICPLVDLANNEKDGVDL) are cytoplasmic.

Belongs to the MIP/aquaporin (TC 1.A.8) family. In terms of assembly, homotetramer.

It is found in the cell membrane. It catalyses the reaction H2O(in) = H2O(out). The enzyme catalyses glycerol(in) = glycerol(out). The catalysed reaction is urea(in) = urea(out). It carries out the reaction NH4(+)(in) = NH4(+)(out). It catalyses the reaction methylamine(out) = methylamine(in). The enzyme catalyses formamide(out) = formamide(in). Mediates water and glycerol transport across the cell membrane. Permeable to sugar alcohols of up to five carbons and urea. Permeable to ammonia, methylamine and formamide. This is Aquaglyceroporin from Plasmodium falciparum (isolate 3D7).